Consider the following 708-residue polypeptide: MANEEDDPVVQEIDVYLAKSLAEKLYLFQYPVRPASMTYDDIPHLSAKIKPKQQKVELEMAIDTLNPNYCRSKGEQIALNVDGACADETSTYSSKLMDKQTFCSSQTTSNTSRYAAALYRQGELHLTPLHGILQLRPSFSYLDKADAKHREREAANEAGDSSQDEAEDDVKQITVRFSRPESEQARQRRVQSYEFLQKKHAEEPWVHLHYYGLRDSRSEHERQYLLCPGSSGVENTELVKSPSEYLMMLMPPSQEEEKDKPVAPSNVLSMAQLRTLPLADQIKILMKNVKVMPFANLMSLLGPSIDSVAVLRGIQKVAMLVQGNWVVKSDILYPKDSSSPHSGVPAEVLCRGRDFVMWKFTQSRWVVRKEVATVTKLCAEDVKDFLEHMAVVRINKGWEFILPYDGEFIKKHPDVVQRQHMLWTGIQAKLEKVYNLVKETMPKKPDAQSGPAGLVCGDQRIQVAKTKAQQNHALLERELQRRKEQLRVPAVPPGVRIKEEPVSEEGEEDEEQEAEEEPMDTSPSGLHSKLANGLPLGRAAGTDSFNGHPPQGCASTPVARELKAFVEATFQRQFVLTLSELKRLFNLHLASLPPGHTLFSGISDRMLQDTVLAAGCKQILVPFPPQTAASPDEQKVFALWESGDMSDQHRQVLLEIFSKNYRVRRNMIQSRLTQECGEDLSKQEVDKVLKDCCVSYGGMWYLKGTVQS.

The span at 146-155 shows a compositional bias: basic and acidic residues; sequence DAKHREREAA. The disordered stretch occupies residues 146 to 170; sequence DAKHREREAANEAGDSSQDEAEDDV. A phosphoserine mark is found at Ser161 and Ser162. Lys171 participates in a covalent cross-link: Glycyl lysine isopeptide (Lys-Gly) (interchain with G-Cter in SUMO2). At Ser192 the chain carries Phosphoserine. Position 224 is a phosphotyrosine (Tyr224). Lys432 is covalently cross-linked (Glycyl lysine isopeptide (Lys-Gly) (interchain with G-Cter in SUMO2)). The interval 485 to 552 is disordered; it reads QLRVPAVPPG…DSFNGHPPQG (68 aa). Lys498 is covalently cross-linked (Glycyl lysine isopeptide (Lys-Gly) (interchain with G-Cter in SUMO1); alternate). Lys498 is covalently cross-linked (Glycyl lysine isopeptide (Lys-Gly) (interchain with G-Cter in SUMO2); alternate). Residues 502-519 are compositionally biased toward acidic residues; the sequence is VSEEGEEDEEQEAEEEPM. Ser503 and Ser522 each carry phosphoserine. The required for Pol III complex stability stretch occupies residues 556 to 708; that stretch reads TPVARELKAF…MWYLKGTVQS (153 aa). Residue Lys659 forms a Glycyl lysine isopeptide (Lys-Gly) (interchain with G-Cter in SUMO2) linkage.

As to quaternary structure, component of the RNA polymerase III complex consisting of at least 17 subunits: a ten-subunit horseshoe-shaped catalytic core composed of POLR3A/RPC1, POLR3B/RPC2, POLR1C/RPAC1, POLR1D/RPAC2, POLR3K/RPC10, POLR2E/RPABC1, POLR2F/RPABC2, POLR2H/RPABC3, POLR2K/RPABC4 and POLR2L/RPABC5; the stalk composed of two subunits POLR3H/RPC8 and CRCP/RPC9, forming a structural mobile part that protrudes out of the core and functions primarily in transcription initiation; and additional subunits homologous to general transcription factors of the RNA polymerase II machinery, POLR3D/RPC4-POLR3E/RPC5 heterodimer and POLR3/CRPC3-POLR3F/RPC6-POLR3G/RPC7 heterotrimer.

The protein resides in the nucleus. DNA-dependent RNA polymerase catalyzes the transcription of DNA into RNA using the four ribonucleoside triphosphates as substrates. Specific peripheric component of RNA polymerase III (Pol III) which synthesizes small non-coding RNAs including 5S rRNA, snRNAs, tRNAs and miRNAs from at least 500 distinct genomic loci. Assembles with POLR3D/RPC4 forming a subcomplex that binds the Pol III core. Enables recruitment of Pol III at transcription initiation site and drives transcription initiation from both type 2 and type 3 DNA promoters. Required for efficient transcription termination and reinitiation. Plays a key role in sensing and limiting infection by intracellular bacteria and DNA viruses. Acts as a nuclear and cytosolic DNA sensor involved in innate immune response. Can sense non-self dsDNA that serves as template for transcription into dsRNA. The non-self RNA polymerase III transcripts, such as Epstein-Barr virus-encoded RNAs (EBERs) induce type I interferon and NF-kappa-B through the RIG-I pathway. This is DNA-directed RNA polymerase III subunit RPC5 from Homo sapiens (Human).